The sequence spans 118 residues: Large ribosomal subunit protein bL20 (118 aa).

This sequence belongs to the bacterial ribosomal protein bL20 family.

Its function is as follows. Binds directly to 23S ribosomal RNA and is necessary for the in vitro assembly process of the 50S ribosomal subunit. It is not involved in the protein synthesizing functions of that subunit. The sequence is that of Large ribosomal subunit protein bL20 from Staphylococcus aureus (strain Mu3 / ATCC 700698).